The sequence spans 311 residues: Quinolinate synthase (311 aa).

Iminosuccinate is bound by residues histidine 25 and serine 42. Residue cysteine 87 coordinates [4Fe-4S] cluster. Residues 113–115 (YIN) and serine 130 each bind iminosuccinate. Residue cysteine 175 participates in [4Fe-4S] cluster binding. Iminosuccinate-binding positions include 201–203 (HPE) and threonine 218. Position 268 (cysteine 268) interacts with [4Fe-4S] cluster.

This sequence belongs to the quinolinate synthase family. Type 2 subfamily. [4Fe-4S] cluster serves as cofactor.

The protein resides in the cytoplasm. It carries out the reaction iminosuccinate + dihydroxyacetone phosphate = quinolinate + phosphate + 2 H2O + H(+). It participates in cofactor biosynthesis; NAD(+) biosynthesis; quinolinate from iminoaspartate: step 1/1. Catalyzes the condensation of iminoaspartate with dihydroxyacetone phosphate to form quinolinate. In Saccharolobus solfataricus (strain ATCC 35092 / DSM 1617 / JCM 11322 / P2) (Sulfolobus solfataricus), this protein is Quinolinate synthase.